The chain runs to 125 residues: Glycine cleavage system H protein (125 aa).

The Lipoyl-binding domain maps to 23–105 (VSTVGITEHA…FEGGWLFKVR (83 aa)). Position 64 is an N6-lipoyllysine (lysine 64).

It belongs to the GcvH family. In terms of assembly, the glycine cleavage system is composed of four proteins: P, T, L and H. (R)-lipoate is required as a cofactor.

In terms of biological role, the glycine cleavage system catalyzes the degradation of glycine. The H protein shuttles the methylamine group of glycine from the P protein to the T protein. The sequence is that of Glycine cleavage system H protein from Streptomyces avermitilis (strain ATCC 31267 / DSM 46492 / JCM 5070 / NBRC 14893 / NCIMB 12804 / NRRL 8165 / MA-4680).